The primary structure comprises 111 residues: Ribonuclease P protein component 1 (111 aa).

Belongs to the eukaryotic/archaeal RNase P protein component 1 family. As to quaternary structure, consists of a catalytic RNA component and at least 4-5 protein subunits.

The protein localises to the cytoplasm. It catalyses the reaction Endonucleolytic cleavage of RNA, removing 5'-extranucleotides from tRNA precursor.. Part of ribonuclease P, a protein complex that generates mature tRNA molecules by cleaving their 5'-ends. The chain is Ribonuclease P protein component 1 from Hyperthermus butylicus (strain DSM 5456 / JCM 9403 / PLM1-5).